The following is a 311-amino-acid chain: 26S proteasome regulatory subunit RPN11 (311 aa).

The 136-residue stretch at 32-167 (VYISSLALLK…IDAFRLISPA (136 aa)) folds into the MPN domain. 3 residues coordinate Zn(2+): histidine 114, histidine 116, and aspartate 127. The JAMM motif motif lies at 114–127 (HSHPGFGCWLSSVD).

This sequence belongs to the peptidase M67A family.

Acts as a regulatory subunit of the 26 proteasome which is involved in the ATP-dependent degradation of ubiquitinated proteins. The sequence is that of 26S proteasome regulatory subunit RPN11 (RPN11) from Eremothecium gossypii (strain ATCC 10895 / CBS 109.51 / FGSC 9923 / NRRL Y-1056) (Yeast).